The following is a 1005-amino-acid chain: Defense-associated sirtuin 2 (1005 aa).

Residues 1–295 (MVKVDLESKR…YSAVMDLLIE (295 aa)) form an SIR2 region. Positions 56-111 (YPQWWRLVDKYHEELYGSPKKGNYSSDEYLRIPQIFYNVKGEMAFDGILKDFFQVD) are inter-dimer interaction. Residues tyrosine 134, aspartate 135, and histidine 171 contribute to the active site. The segment at 296–548 (SQENKFITKD…YKILEFLSDN (253 aa)) is MID. Positions 549 to 1005 (QFLYDDTVKL…YLEILMNYFI (457 aa)) are CTD.

In terms of assembly, homotetramer (dimer of dimers). Homodimer. The SIR2 domains are arranged in a central core, adopting a head-to-head arrangement, while the CTDs are positioned at the periphery of the complex. Tetramerization is necessary for the activation of NADase activity. The NADase enzymatic activity of this homotetrameric form is autoinhibited. The activated form of DSR2 (after binding to the phage tube protein) exists as tetramers and dimers, with the tetramers exhibiting more NADase activity. Each tetramer binds 4 NAD(+) molecules. As to quaternary structure, (Microbial infection) Interacts (via C-terminus) with phage SPR tail tube monomer protein (via N-terminus) in a 4:4 DSR2-Tube assembly; this interaction induces a conformation change of the tube protein and activates the NADase activity of DSR2. (Microbial infection) Interacts (via C-terminus) with phage SPbeta DSAD1 in a 4:2 ratio; this interaction prevents activation of the NADase defense activity of DSR2.

It carries out the reaction NAD(+) + H2O = ADP-D-ribose + nicotinamide + H(+). (Microbial infection) NADase activity is activated through the binding of SPR phage tail tube monomer protein. NADase activity is inhibited through the binding to the phage SPbeta DSR anti-defense 1 (DSAD1). Its function is as follows. Anti-phage defense protein that is activated through the binding to the phage tail tube protein monomer and which hydrolyzes NAD+ upon activation (NADase activity). The resulting depletion of NAD(+) leads to an abortive infection. The protein is Defense-associated sirtuin 2 of Bacillus subtilis.